The primary structure comprises 252 residues: Triosephosphate isomerase (252 aa).

10–12 (NWK) contributes to the substrate binding site. Histidine 96 (electrophile) is an active-site residue. Catalysis depends on glutamate 168, which acts as the Proton acceptor. Residues glycine 174, serine 214, and 235–236 (GG) contribute to the substrate site.

This sequence belongs to the triosephosphate isomerase family. As to quaternary structure, homodimer.

The protein resides in the cytoplasm. The enzyme catalyses D-glyceraldehyde 3-phosphate = dihydroxyacetone phosphate. Its pathway is carbohydrate biosynthesis; gluconeogenesis. It participates in carbohydrate degradation; glycolysis; D-glyceraldehyde 3-phosphate from glycerone phosphate: step 1/1. In terms of biological role, involved in the gluconeogenesis. Catalyzes stereospecifically the conversion of dihydroxyacetone phosphate (DHAP) to D-glyceraldehyde-3-phosphate (G3P). The sequence is that of Triosephosphate isomerase from Lactobacillus delbrueckii subsp. bulgaricus (strain ATCC 11842 / DSM 20081 / BCRC 10696 / JCM 1002 / NBRC 13953 / NCIMB 11778 / NCTC 12712 / WDCM 00102 / Lb 14).